A 216-amino-acid polypeptide reads, in one-letter code: DNA replication complex GINS protein psf1 (216 aa).

Residues 110–133 (QTTGGPKGVTEGNEGGGTTSSLSP) are disordered. Gly residues predominate over residues 111–127 (TTGGPKGVTEGNEGGGT).

It belongs to the GINS1/PSF1 family. Component of the GINS complex which is a heterotetramer of div-26/sld5, drc-1/psf1, drc-2/psf2 and drc-3/psf3.

The protein resides in the nucleus. In terms of biological role, the GINS complex plays an essential role in the initiation of DNA replication. The sequence is that of DNA replication complex GINS protein psf1 (drc-1) from Neurospora crassa (strain ATCC 24698 / 74-OR23-1A / CBS 708.71 / DSM 1257 / FGSC 987).